Here is a 185-residue protein sequence, read N- to C-terminus: Celestoxin (185 aa).

The signal sequence occupies residues 1–20; it reads MKFIAAVLLVALLCPKDSTS. The propeptide occupies 21-148; it reads LASRLSGLLG…GLPVALPVSV (128 aa).

Expressed by the mandibular venom gland.

Its subcellular location is the secreted. Has a hypotensive activity. The polypeptide is Celestoxin (Caribicus warreni (Haitian giant galliwasp)).